A 201-amino-acid polypeptide reads, in one-letter code: Ubiquitin-conjugating enzyme E2 E2 (201 aa).

A compositionally biased stretch (basic and acidic residues) spans 1-10; sequence MSTEAQRVDD. The interval 1–55 is disordered; the sequence is MSTEAQRVDDSPSTSGGSSDGDQRESVQQEPDREQVQPKKKEGKISSKTAAKLST. Residue Ser2 is modified to N-acetylserine. Ser11, Ser15, Ser18, and Ser19 each carry phosphoserine. Over residues 21–45 the composition is skewed to basic and acidic residues; it reads GDQRESVQQEPDREQVQPKKKEGKI. The span at 46 to 55 shows a compositional bias: low complexity; it reads SSKTAAKLST. The UBC core domain occupies 55 to 201; it reads TSAKRIQKEL…ARQWTKRYAT (147 aa). Residue Cys139 is the Glycyl thioester intermediate of the active site.

Belongs to the ubiquitin-conjugating enzyme family. Post-translationally, autoubiquitinated.

The enzyme catalyses S-ubiquitinyl-[E1 ubiquitin-activating enzyme]-L-cysteine + [E2 ubiquitin-conjugating enzyme]-L-cysteine = [E1 ubiquitin-activating enzyme]-L-cysteine + S-ubiquitinyl-[E2 ubiquitin-conjugating enzyme]-L-cysteine.. It functions in the pathway protein modification; protein ubiquitination. Functionally, accepts ubiquitin from the E1 complex and catalyzes its covalent attachment to other proteins. In vitro catalyzes 'Lys-11'- and 'Lys-48'-, as well as 'Lys-63'-linked polyubiquitination. Catalyzes the ISGylation of influenza A virus NS1 protein. This is Ubiquitin-conjugating enzyme E2 E2 (Ube2e2) from Mus musculus (Mouse).